We begin with the raw amino-acid sequence, 338 residues long: Phosphate acyltransferase (338 aa).

Belongs to the PlsX family. Homodimer. Probably interacts with PlsY.

Its subcellular location is the cytoplasm. The enzyme catalyses a fatty acyl-[ACP] + phosphate = an acyl phosphate + holo-[ACP]. It functions in the pathway lipid metabolism; phospholipid metabolism. Functionally, catalyzes the reversible formation of acyl-phosphate (acyl-PO(4)) from acyl-[acyl-carrier-protein] (acyl-ACP). This enzyme utilizes acyl-ACP as fatty acyl donor, but not acyl-CoA. The chain is Phosphate acyltransferase from Gloeobacter violaceus (strain ATCC 29082 / PCC 7421).